Consider the following 673-residue polypeptide: UvrABC system protein B (673 aa).

Residues 24–182 (EGVERNDPAQ…YSFVEILYNR (159 aa)) form the Helicase ATP-binding domain. 37–44 (GVTGSGKT) is a binding site for ATP. The short motif at 90–113 (YYDYYQPEAFMPTSGLYIEKDLAI) is the Beta-hairpin element. Residues 429–591 (QIDDLLDEIQ…ITPITVNKSK (163 aa)) enclose the Helicase C-terminal domain. Residues 634-669 (TKMIDRAKKDMDKAAKDLDFVEAARYRDEMFALQKI) form the UVR domain.

It belongs to the UvrB family. In terms of assembly, forms a heterotetramer with UvrA during the search for lesions. Interacts with UvrC in an incision complex.

Its subcellular location is the cytoplasm. The UvrABC repair system catalyzes the recognition and processing of DNA lesions. A damage recognition complex composed of 2 UvrA and 2 UvrB subunits scans DNA for abnormalities. Upon binding of the UvrA(2)B(2) complex to a putative damaged site, the DNA wraps around one UvrB monomer. DNA wrap is dependent on ATP binding by UvrB and probably causes local melting of the DNA helix, facilitating insertion of UvrB beta-hairpin between the DNA strands. Then UvrB probes one DNA strand for the presence of a lesion. If a lesion is found the UvrA subunits dissociate and the UvrB-DNA preincision complex is formed. This complex is subsequently bound by UvrC and the second UvrB is released. If no lesion is found, the DNA wraps around the other UvrB subunit that will check the other stand for damage. This chain is UvrABC system protein B, found in Cytophaga hutchinsonii (strain ATCC 33406 / DSM 1761 / CIP 103989 / NBRC 15051 / NCIMB 9469 / D465).